We begin with the raw amino-acid sequence, 284 residues long: uncharacterized protein (284 aa).

Belongs to the IIV-6 436R family.

This is an uncharacterized protein from Invertebrate iridescent virus 3 (IIV-3).